The primary structure comprises 842 residues: Protein translocase subunit SecA (842 aa).

ATP contacts are provided by residues Gln-85, Gly-103–Thr-107, and Asp-493. Cys-825, Cys-827, Cys-836, and His-837 together coordinate Zn(2+).

This sequence belongs to the SecA family. Monomer and homodimer. Part of the essential Sec protein translocation apparatus which comprises SecA, SecYEG and auxiliary proteins SecDF. Other proteins may also be involved. The cofactor is Zn(2+).

Its subcellular location is the cell membrane. The protein resides in the cytoplasm. The enzyme catalyses ATP + H2O + cellular proteinSide 1 = ADP + phosphate + cellular proteinSide 2.. Functionally, part of the Sec protein translocase complex. Interacts with the SecYEG preprotein conducting channel. Has a central role in coupling the hydrolysis of ATP to the transfer of proteins into and across the cell membrane, serving as an ATP-driven molecular motor driving the stepwise translocation of polypeptide chains across the membrane. The chain is Protein translocase subunit SecA from Streptococcus equi subsp. zooepidemicus (strain H70).